The primary structure comprises 514 residues: UDP-N-acetylmuramyl-tripeptide synthetase (514 aa).

The UDP-N-acetyl-alpha-D-muramoyl-L-alanyl-D-glutamate site is built by Leu44 and Ser46. ATP is bound at residue 129–135 (GTNGKTS). UDP-N-acetyl-alpha-D-muramoyl-L-alanyl-D-glutamate is bound by residues 171 to 172 (TT), Ser198, and Arg206. Lys238 carries the N6-carboxylysine modification.

This sequence belongs to the MurCDEF family. MurE subfamily. In terms of processing, carboxylation is probably crucial for Mg(2+) binding and, consequently, for the gamma-phosphate positioning of ATP.

The protein localises to the cytoplasm. The protein operates within cell wall biogenesis; peptidoglycan biosynthesis. Catalyzes the addition of an amino acid to the nucleotide precursor UDP-N-acetylmuramoyl-L-alanyl-D-glutamate (UMAG) in the biosynthesis of bacterial cell-wall peptidoglycan. In Leifsonia xyli subsp. xyli (strain CTCB07), this protein is UDP-N-acetylmuramyl-tripeptide synthetase.